The following is a 214-amino-acid chain: Adenylate kinase (214 aa).

10–15 (GAGKGT) serves as a coordination point for ATP. Residues 30 to 59 (STGDMLRAAVKSGSELGKQAKDIMDAGKLV) are NMP. Residues threonine 31, arginine 36, 57–59 (KLV), 85–88 (GFPR), and glutamine 92 contribute to the AMP site. Residues 122 to 159 (GRRVHAPSGRVYHVKFNPPKVEGKDDVTGEELTTRKDD) are LID. Residues arginine 123 and 132–133 (VY) each bind ATP. AMP is bound by residues arginine 156 and arginine 167. Lysine 192 carries the N6-acetyllysine modification. An ATP-binding site is contributed by lysine 200.

The protein belongs to the adenylate kinase family. As to quaternary structure, monomer.

Its subcellular location is the cytoplasm. The catalysed reaction is AMP + ATP = 2 ADP. It participates in purine metabolism; AMP biosynthesis via salvage pathway; AMP from ADP: step 1/1. In terms of biological role, catalyzes the reversible transfer of the terminal phosphate group between ATP and AMP. Plays an important role in cellular energy homeostasis and in adenine nucleotide metabolism. In Escherichia coli O8 (strain IAI1), this protein is Adenylate kinase.